Here is a 317-residue protein sequence, read N- to C-terminus: Gluconeogenesis factor (317 aa).

Belongs to the gluconeogenesis factor family.

It is found in the cytoplasm. Required for morphogenesis under gluconeogenic growth conditions. Required, in gluconeogenic growth conditions, for the correct localization of PBP1 and hence for displaying a normal rod shape. In Bacillus subtilis (strain 168), this protein is Gluconeogenesis factor (mgfK).